The primary structure comprises 494 residues: Probable cytochrome P450 518A1 (494 aa).

Residues 1-21 traverse the membrane as a helical segment; the sequence is MSILIILIISIIFYLIFDFLY. C438 contributes to the heme binding site.

Belongs to the cytochrome P450 family. The cofactor is heme.

The protein resides in the membrane. The chain is Probable cytochrome P450 518A1 (cyp518A1) from Dictyostelium discoideum (Social amoeba).